The sequence spans 163 residues: UPF0262 protein RPA4530 (163 aa).

This sequence belongs to the UPF0262 family.

This chain is UPF0262 protein RPA4530, found in Rhodopseudomonas palustris (strain ATCC BAA-98 / CGA009).